The primary structure comprises 383 residues: Thioredoxin reductase 2 (383 aa).

Residues 66–69, 87–88, 95–100, Asn-109, Val-142, Cys-200, Asp-345, and 352–354 contribute to the FAD site; these read SGPA, FE, IAPGGQ, and RQA. Residues Cys-197 and Cys-200 are joined by a disulfide bond.

This sequence belongs to the class-II pyridine nucleotide-disulfide oxidoreductase family. In terms of assembly, homodimer. Requires FAD as cofactor.

Its subcellular location is the cytoplasm. The protein resides in the mitochondrion matrix. It carries out the reaction [thioredoxin]-dithiol + NADP(+) = [thioredoxin]-disulfide + NADPH + H(+). In terms of biological role, possesses thioredoxin-disulfide reductase activity towards thioredoxins O1, O2 and F3. In Arabidopsis thaliana (Mouse-ear cress), this protein is Thioredoxin reductase 2 (NTR2).